A 281-amino-acid chain; its full sequence is Phosphatidylserine decarboxylase proenzyme (281 aa).

Residues Asp-90, His-143, and Ser-248 each act as charge relay system; for autoendoproteolytic cleavage activity in the active site. The Schiff-base intermediate with substrate; via pyruvic acid; for decarboxylase activity role is filled by Ser-248. The residue at position 248 (Ser-248) is a Pyruvic acid (Ser); by autocatalysis.

This sequence belongs to the phosphatidylserine decarboxylase family. PSD-B subfamily. Prokaryotic type I sub-subfamily. In terms of assembly, heterodimer of a large membrane-associated beta subunit and a small pyruvoyl-containing alpha subunit. Requires pyruvate as cofactor. In terms of processing, is synthesized initially as an inactive proenzyme. Formation of the active enzyme involves a self-maturation process in which the active site pyruvoyl group is generated from an internal serine residue via an autocatalytic post-translational modification. Two non-identical subunits are generated from the proenzyme in this reaction, and the pyruvate is formed at the N-terminus of the alpha chain, which is derived from the carboxyl end of the proenzyme. The autoendoproteolytic cleavage occurs by a canonical serine protease mechanism, in which the side chain hydroxyl group of the serine supplies its oxygen atom to form the C-terminus of the beta chain, while the remainder of the serine residue undergoes an oxidative deamination to produce ammonia and the pyruvoyl prosthetic group on the alpha chain. During this reaction, the Ser that is part of the protease active site of the proenzyme becomes the pyruvoyl prosthetic group, which constitutes an essential element of the active site of the mature decarboxylase.

The protein localises to the cell membrane. It catalyses the reaction a 1,2-diacyl-sn-glycero-3-phospho-L-serine + H(+) = a 1,2-diacyl-sn-glycero-3-phosphoethanolamine + CO2. It participates in phospholipid metabolism; phosphatidylethanolamine biosynthesis; phosphatidylethanolamine from CDP-diacylglycerol: step 2/2. Catalyzes the formation of phosphatidylethanolamine (PtdEtn) from phosphatidylserine (PtdSer). The protein is Phosphatidylserine decarboxylase proenzyme of Francisella philomiragia subsp. philomiragia (strain ATCC 25017 / CCUG 19701 / FSC 153 / O#319-036).